We begin with the raw amino-acid sequence, 261 residues long: Arcelin-5A (261 aa).

The N-terminal stretch at 1 to 21 (MASSKLLSLALFLVLLTHANS) is a signal peptide. 3 N-linked (GlcNAc...) asparagine glycosylation sites follow: asparagine 43, asparagine 91, and asparagine 100. Cysteine 167 and cysteine 203 are disulfide-bonded. A propeptide spanning residues 255–261 (ILLNNIL) is cleaved from the precursor.

Belongs to the leguminous lectin family. In terms of assembly, monomer. In terms of processing, the C-terminal segment appears to be highly susceptible to proteolysis.

Its function is as follows. Seed storage. This carbohydrate-binding lectin has toxic effects on bean bruchid pests. The sequence is that of Arcelin-5A (ARC5A) from Phaseolus vulgaris (Kidney bean).